Here is a 930-residue protein sequence, read N- to C-terminus: Transcription initiation factor TFIID subunit 3 (930 aa).

6 disordered regions span residues 128–151 (MPPI…GTSA), 175–381 (YLSK…KKLP), 404–507 (PDPF…PEPL), 519–578 (SSVE…QWKE), 599–755 (DTKV…PAPS), and 782–820 (EAKP…APPQ). Residues 274 to 291 (KTSSPGQKTKSPKTTPSP) are compositionally biased toward low complexity. Positions 428–446 (VSETTATTPKPSVSTNCSN) are enriched in polar residues. The segment covering 448 to 462 (AGATPVPPSGGTSSS) has biased composition (low complexity). Positions 482 to 494 (GTPSNPPANFTYF) are enriched in polar residues. The segment covering 525–539 (KKLKKELKTKMKKKE) has biased composition (basic residues). 3 stretches are compositionally biased toward basic and acidic residues: residues 540-578 (KQKE…QWKE), 599-612 (DTKV…TKKE), and 621-648 (KEKE…DKIK). The segment covering 674–686 (LPSMLPSLSPMLP) has biased composition (low complexity). Residues 688–699 (KLFEDKEKPKEK) are compositionally biased toward basic and acidic residues. Basic residues predominate over residues 700–711 (KKDKKEKKKKKE). A compositionally biased stretch (basic and acidic residues) spans 712 to 737 (REKDKEKEKKDKEKERKEREKKEKEK). Pro residues predominate over residues 793 to 820 (KTPPPVPSPVPAPVHVTPPPAPVPAPPQ). The PHD-type zinc-finger motif lies at 866-916 (IWFCPGCNKPDDGSPMIGCDDCDDWYHWPCVGITAAPPEEMQWFCSKCANK).

This sequence belongs to the TAF3 family. Component of the TFIID basal transcription factor complex, composed of TATA-box-binding protein TBP, and a number of TBP-associated factors (TAFs), including TAF1, TAF2, TAF3, TAF4, TAF5, TAF6, TAF7, TAF8, TAF9, TAF10, TAF11, TAF12 and TAF13. Interacts with TAF10 via the histone fold. Interacts with TAF13, TBP, SAP130 and GCN5L2. Interacts with TBPL2.

Its subcellular location is the nucleus. Functionally, the TFIID basal transcription factor complex plays a major role in the initiation of RNA polymerase II (Pol II)-dependent transcription. TFIID recognizes and binds promoters with or without a TATA box via its subunit TBP, a TATA-box-binding protein, and promotes assembly of the pre-initiation complex (PIC). The TFIID complex consists of TBP and TBP-associated factors (TAFs), including TAF1, TAF2, TAF3, TAF4, TAF5, TAF6, TAF7, TAF8, TAF9, TAF10, TAF11, TAF12 and TAF13. The TFIID complex structure can be divided into 3 modules TFIID-A, TFIID-B, and TFIID-C. TAF3 forms the TFIID-A module together with TAF5 and TBP. Required in complex with TBPL2 for the differentiation of myoblasts into myocytes. The TAF3-TBPL2 complex replaces TFIID at specific promoters at an early stage in the differentiation process. This is Transcription initiation factor TFIID subunit 3 (TAF3) from Gallus gallus (Chicken).